We begin with the raw amino-acid sequence, 1719 residues long: Serine/threonine-protein kinase MRCK alpha (1719 aa).

Positions 77–343 (FEILKVIGRG…IEDFKKHPFF (267 aa)) constitute a Protein kinase domain. ATP contacts are provided by residues 83 to 91 (IGRGAFGEV) and Lys106. Asp201 acts as the Proton acceptor in catalysis. 2 positions are modified to phosphoserine; by autocatalysis: Ser222 and Ser234. Thr240 carries the post-translational modification Phosphothreonine; by autocatalysis. Residues 344–414 (SGIDWDNIRN…TSSCVLSDRS (71 aa)) enclose the AGC-kinase C-terminal domain. Coiled coils occupy residues 437 to 670 (NNLA…KQKQ), 713 to 820 (SEIK…WEAQ), and 880 to 943 (LELQ…SEKG). The Phorbol-ester/DAG-type zinc-finger motif lies at 999–1049 (THQFFVKSFTAPTKCHQCTSLMVGLIRQGCSCEVCGFSCHITCVNKAPTVC). The 120-residue stretch at 1069–1188 (GTAYEGHVRI…WVGVLSELHK (120 aa)) folds into the PH domain. Residues 1214–1486 (IKTTQAAAII…RPLNTEGSLN (273 aa)) enclose the CNH domain. Ser1532 bears the Phosphoserine mark. In terms of domain architecture, CRIB spans 1558–1571 (ISNPTNFNHIAHMG). The disordered stretch occupies residues 1579-1719 (LKDLPMNPRP…ESTDRGSWDP (141 aa)). Positions 1591-1606 (SRTVFSGSVSIPSITK) are enriched in polar residues. A phosphoserine mark is found at Ser1598, Ser1600, Ser1616, Ser1638, Ser1651, Ser1656, Ser1680, Ser1706, and Ser1708. Residues 1612 to 1627 (GRSMSASSGLSARSSA) are compositionally biased toward low complexity. A compositionally biased stretch (low complexity) spans 1652-1661 (PSEGSLSSGG).

It belongs to the protein kinase superfamily. AGC Ser/Thr protein kinase family. DMPK subfamily. In terms of assembly, homodimer and homotetramer via the coiled coil regions. Interacts tightly with GTP-bound but not GDP-bound CDC42. Forms a tripartite complex with MYO18A and LRP35A with the latter acting as an adapter connecting CDC42BPA and MYO18A. LRP35A binding results in activation of CDC42BPA by abolition of its negative autoregulation. Interacts with LURAP1. Interacts (via AGC-kinase C-terminal domain) with FAM89B/LRAP25 (via LRR repeat). Forms a tripartite complex with FAM89B/LRAP25 and LIMK1. The cofactor is Mg(2+). In terms of processing, proteolytically cleaved by caspases upon apoptosis induction. The cleavage at Asp-478 by CASP3 increases its kinase activity (in vitro).

The protein resides in the cytoplasm. The protein localises to the cell projection. It localises to the lamellipodium. The enzyme catalyses L-seryl-[protein] + ATP = O-phospho-L-seryl-[protein] + ADP + H(+). The catalysed reaction is L-threonyl-[protein] + ATP = O-phospho-L-threonyl-[protein] + ADP + H(+). With respect to regulation, maintained in an inactive, closed conformation by an interaction between the kinase domain and the negative autoregulatory C-terminal coiled-coil region. Agonist binding to the phorbol ester binding site disrupts this, releasing the kinase domain to allow N-terminus-mediated dimerization and kinase activation by transautophosphorylation. Inhibited by chelerythrine chloride. In terms of biological role, serine/threonine-protein kinase which is an important downstream effector of CDC42 and plays a role in the regulation of cytoskeleton reorganization and cell migration. Regulates actin cytoskeletal reorganization via phosphorylation of PPP1R12C and MYL9/MLC2. In concert with MYO18A and LRP35A, is involved in modulating lamellar actomyosin retrograde flow that is crucial to cell protrusion and migration. Phosphorylates: PPP1R12A and LIMK2. May play a role in TFRC-mediated iron uptake. In concert with FAM89B/LRAP25 mediates the targeting of LIMK1 to the lamellipodium resulting in its activation and subsequent phosphorylation of CFL1 which is important for lamellipodial F-actin regulation. Triggers the formation of an extrusion apical actin ring required for epithelial extrusion of apoptotic cells. The protein is Serine/threonine-protein kinase MRCK alpha (Cdc42bpa) of Mus musculus (Mouse).